The primary structure comprises 275 residues: Uridine-5'-phosphate dioxygenase (275 aa).

The Fe cation site is built by His-105, Asp-107, and His-247.

It depends on Fe(2+) as a cofactor.

It catalyses the reaction UMP + 2-oxoglutarate + O2 = uridine-5'-aldehyde + succinate + phosphate + CO2. It functions in the pathway antibiotic biosynthesis. Its activity is regulated as follows. Enhanced by ascorbic acid and inhibited by Zn(2+). Dioxygenase involved in the biosynthesis of the capuramycin-type nucleoside antibiotic A-102395. Catalyzes the dephosphorylation and oxidation of UMP to generate uridine-5'-aldehyde. Can also use the alternative alpha-keto acids pyruvate and alpha-ketoadipate (2-oxoadipate), with very low efficiency. Cannot use alpha-ketobutyrate, alpha-ketovalerate and oxaloacetate. The sequence is that of Uridine-5'-phosphate dioxygenase from Amycolatopsis sp.